The chain runs to 172 residues: Shikimate kinase (172 aa).

17 to 22 (GTGKST) is an ATP binding site. Mg(2+) is bound at residue S21. D39, R63, and G84 together coordinate substrate. R122 serves as a coordination point for ATP. R140 is a substrate binding site.

This sequence belongs to the shikimate kinase family. As to quaternary structure, monomer. It depends on Mg(2+) as a cofactor.

It is found in the cytoplasm. The enzyme catalyses shikimate + ATP = 3-phosphoshikimate + ADP + H(+). It participates in metabolic intermediate biosynthesis; chorismate biosynthesis; chorismate from D-erythrose 4-phosphate and phosphoenolpyruvate: step 5/7. Functionally, catalyzes the specific phosphorylation of the 3-hydroxyl group of shikimic acid using ATP as a cosubstrate. In Staphylococcus haemolyticus (strain JCSC1435), this protein is Shikimate kinase.